The chain runs to 218 residues: Small ribosomal subunit protein uS5 (218 aa).

The tract at residues 1-49 (MPGRQRRDGGSGPAGQNGPNTGDNRGGGDRRGGGRDDRRGGQSAEKSNH) is disordered. Over residues 26–49 (GGGDRRGGGRDDRRGGQSAEKSNH) the composition is skewed to basic and acidic residues. The 64-residue stretch at 49 to 112 (HIERVVTINR…EEARKSFFRV (64 aa)) folds into the S5 DRBM domain.

It belongs to the universal ribosomal protein uS5 family. As to quaternary structure, part of the 30S ribosomal subunit. Contacts proteins S4 and S8.

Its function is as follows. With S4 and S12 plays an important role in translational accuracy. In terms of biological role, located at the back of the 30S subunit body where it stabilizes the conformation of the head with respect to the body. The polypeptide is Small ribosomal subunit protein uS5 (Rhodococcus jostii (strain RHA1)).